A 149-amino-acid chain; its full sequence is Basic phospholipase A2 homolog MitTx-beta (149 aa).

An N-terminal signal peptide occupies residues 1–30 (MDKMNPAHLLVLAAVCVSLLGASSIPPQAL). Disulfide bonds link cysteine 41–cysteine 100, cysteine 55–cysteine 148, cysteine 57–cysteine 73, cysteine 72–cysteine 130, cysteine 79–cysteine 123, cysteine 89–cysteine 116, and cysteine 109–cysteine 121.

This sequence belongs to the phospholipase A2 family. Group I subfamily. K49 sub-subfamily. As to quaternary structure, heterodimer of an alpha (Kunitz-type) and a beta (phospholipase A2 homolog) chains; non-covalently-linked. In terms of tissue distribution, expressed by the venom gland.

It is found in the secreted. In terms of biological role, heterodimer: MitTx, a heteromeric complex between Kunitz- and phospholipase-A2-like proteins, potently, persistently and selectively activates rat and chicken acid-sensing ion channel ASIC1. Both alternatively spliced rat isoforms ASIC1a and ASIC1b are activated, with a higher potency for ASIC1a (EC(50)=9.4 nM) vs ASIC1b (EC(50)=23 nM). The rat ASIC3 subtype is also sensitive to the heterodimer, but with a lower potency (EC(50)=830 nM). On rat ASIC2a, the toxin shows a very weak activation, but produces a remarkable potentiation (&gt;100-fold) of protons when the extracellular pH drops below neutrality. Moderate and weak activations are also observed on the heterotrimers Asic1a-Asic2a and Asic1a-Asic3 (expressed in CHO cells), respectively. The binding sites of the beta subunit of MitTx and the spider psalmotoxin-1 toxin overlap, explaining why these toxins are mutually exclusive. In vivo, the heterodimer elicits robust pain-related behavior in mice by activation of ASIC1 channels on capsaicin-sensitive nerve fibers. Functionally, monomer: does not have phospholipase A2 activity but may maintain some lipid-binding character from its PLA2 lineage, which could aid in effecting neuronal depolarization. This Micrurus tener tener (Texas coral snake) protein is Basic phospholipase A2 homolog MitTx-beta.